The chain runs to 219 residues: Elongation factor Ts, chloroplastic (219 aa).

The protein belongs to the EF-Ts family.

The protein resides in the plastid. It is found in the chloroplast. Associates with the EF-Tu.GDP complex and induces the exchange of GDP to GTP. It remains bound to the aminoacyl-tRNA.EF-Tu.GTP complex up to the GTP hydrolysis stage on the ribosome. This Guillardia theta (Cryptophyte) protein is Elongation factor Ts, chloroplastic (tsf).